The sequence spans 399 residues: Tryptophan synthase beta chain (399 aa).

The residue at position 92 (K92) is an N6-(pyridoxal phosphate)lysine.

This sequence belongs to the TrpB family. As to quaternary structure, tetramer of two alpha and two beta chains. Requires pyridoxal 5'-phosphate as cofactor.

The enzyme catalyses (1S,2R)-1-C-(indol-3-yl)glycerol 3-phosphate + L-serine = D-glyceraldehyde 3-phosphate + L-tryptophan + H2O. It functions in the pathway amino-acid biosynthesis; L-tryptophan biosynthesis; L-tryptophan from chorismate: step 5/5. Its function is as follows. The beta subunit is responsible for the synthesis of L-tryptophan from indole and L-serine. The protein is Tryptophan synthase beta chain of Exiguobacterium sibiricum (strain DSM 17290 / CCUG 55495 / CIP 109462 / JCM 13490 / 255-15).